The chain runs to 320 residues: NAD-dependent protein deacylase SIR2rp2 (320 aa).

A mitochondrion-targeting transit peptide spans 1 to 22 (MRPAGTLASFLERCSARKRGRG). The Deacetylase sirtuin-type domain maps to 23 to 320 (CVVLTGAGCS…MFFRRKTIQL (298 aa)). Residues 28–48 (GAGC…GQYH) and 108–111 (QNVD) each bind NAD(+). The Proton acceptor role is filled by His-144. The Zn(2+) site is built by Cys-152, Cys-155, Cys-207, and Cys-210. Residues 248–250 (GTS), 274–276 (NAG), and Gly-294 each bind NAD(+).

It belongs to the sirtuin family. Class II subfamily. The cofactor is Zn(2+).

It localises to the mitochondrion matrix. It catalyses the reaction N(6)-acetyl-L-lysyl-[protein] + NAD(+) + H2O = 2''-O-acetyl-ADP-D-ribose + nicotinamide + L-lysyl-[protein]. NAD-dependent protein deacylase. Catalyzes the NAD-dependent hydrolysis of acyl groups from lysine residues. In Leishmania major, this protein is NAD-dependent protein deacylase SIR2rp2 (SIR2rp2).